The following is a 325-amino-acid chain: Glutarate 2-hydroxylase (325 aa).

Residues His160, Asp162, and His292 each contribute to the Fe cation site.

Belongs to the glutarate hydroxylase family. Homotetramer. The cofactor is Fe(2+).

The catalysed reaction is glutarate + 2-oxoglutarate + O2 = (S)-2-hydroxyglutarate + succinate + CO2. Its pathway is amino-acid degradation. Its function is as follows. Acts as an alpha-ketoglutarate-dependent dioxygenase catalyzing hydroxylation of glutarate (GA) to L-2-hydroxyglutarate (L2HG). Functions in a L-lysine degradation pathway that proceeds via cadaverine, glutarate and L-2-hydroxyglutarate. The chain is Glutarate 2-hydroxylase from Pseudomonas putida (strain GB-1).